The sequence spans 55 residues: NEYHGFVDKANNENKRKKQQGRDDFVVKPNNFANRRRKDDYNENYYDDVDAADVV.

Positions 1–26 are enriched in basic and acidic residues; sequence NEYHGFVDKANNENKRKKQQGRDDFV. The tract at residues 1 to 39 is disordered; the sequence is NEYHGFVDKANNENKRKKQQGRDDFVVKPNNFANRRRKD.

Possesses antifungal activity against B.cinerea, M.arachidicola, F.oxysporum, R.solani and C.comatus. Its function is as follows. Suppresses the activity of HIV-1 reverse transcriptase and stimulates the proliferation of murine splenocytes. The sequence is that of Cicadin from Cicada flammata.